The following is a 336-amino-acid chain: Cell division protein ZipA (336 aa).

Topologically, residues 1–6 (MMQDLR) are periplasmic. The helical transmembrane segment at 7 to 27 (LILIVVGAIAIIALLLHGLWT) threads the bilayer. Residues 28–336 (SRKERSSLFR…RIRDVLKANA (309 aa)) are Cytoplasmic-facing. A compositionally biased stretch (basic and acidic residues) spans 40-51 (PVKRAKKARDET). Residues 40–190 (PVKRAKKARD…APAQPQQPAE (151 aa)) form a disordered region. The segment covering 76 to 89 (SFSSSSFDNASFDN) has biased composition (low complexity). Positions 126–138 (PRSQVRGDSNPQV) are enriched in polar residues. Positions 179-190 (QPAPAQPQQPAE) are enriched in low complexity.

Belongs to the ZipA family. Interacts with FtsZ via their C-terminal domains.

Its subcellular location is the cell inner membrane. Essential cell division protein that stabilizes the FtsZ protofilaments by cross-linking them and that serves as a cytoplasmic membrane anchor for the Z ring. Also required for the recruitment to the septal ring of downstream cell division proteins. This chain is Cell division protein ZipA, found in Pectobacterium carotovorum subsp. carotovorum (strain PC1).